Here is a 416-residue protein sequence, read N- to C-terminus: Probable intermembrane transport protein HI_1671 (416 aa).

Helical transmembrane passes span 62 to 82 (ILILMPFSLNYPLLSLHLLGI), 107 to 127 (IFICAVVMPITFALLVIMLWL), 138 to 158 (VLLFLGYIKAWVMFDVYLVAL), 172 to 192 (EINIYLIPFIFTALLTTLLFI), 263 to 283 (LIAGIIMLFPANLLPISGIYL), 306 to 326 (FVAFVVFFASIFVPISKIFIM), 347 to 367 (LLHLVHFVGRWSMLDLFVLAL), and 377 to 397 (IINFTVGPGAFYFGAAVFCTM).

This sequence belongs to the PqiA family.

The protein resides in the cell inner membrane. In Haemophilus influenzae (strain ATCC 51907 / DSM 11121 / KW20 / Rd), this protein is Probable intermembrane transport protein HI_1671.